The sequence spans 308 residues: Oxygen-dependent coproporphyrinogen-III oxidase (308 aa).

Ser100 contributes to the substrate binding site. A divalent metal cation-binding residues include His104 and His114. The Proton donor role is filled by His114. 116–118 is a binding site for substrate; sequence NFR. His153 and His183 together coordinate a divalent metal cation. Residues 248-283 are important for dimerization; that stretch reads YVEFNLVFDRGTIFGLQSGGRTESILSSMPPIATWK. 266–268 is a substrate binding site; that stretch reads GGR.

The protein belongs to the aerobic coproporphyrinogen-III oxidase family. As to quaternary structure, homodimer. A divalent metal cation serves as cofactor.

It localises to the cytoplasm. The catalysed reaction is coproporphyrinogen III + O2 + 2 H(+) = protoporphyrinogen IX + 2 CO2 + 2 H2O. Its pathway is porphyrin-containing compound metabolism; protoporphyrin-IX biosynthesis; protoporphyrinogen-IX from coproporphyrinogen-III (O2 route): step 1/1. In terms of biological role, involved in the heme biosynthesis. Catalyzes the aerobic oxidative decarboxylation of propionate groups of rings A and B of coproporphyrinogen-III to yield the vinyl groups in protoporphyrinogen-IX. This Francisella tularensis subsp. tularensis (strain FSC 198) protein is Oxygen-dependent coproporphyrinogen-III oxidase.